Consider the following 666-residue polypeptide: MNAYNSITPETIQEDMRYLQLLSHSFPTIADASTEIINLEAILNLPKGTEHFLADLHGEYEAFQHVLRNASGAIKRKVNEIFGNTLRENEKKELCTLIYYPEQKLDLVKAVETDLDDWYVITLNQLVRVCQNVSSKYTRSKVRKSLPKEFSYIIQELLHENSMVPNKQAYINVIISTIISTRRADDFIIALCNLIQRLTIDTLHVLGDIFDRGPAPHRIMDILCDYHNFDVQWGNHDILWMGAAAGNDCCMANVLRLAMRYGNLAALEDGYGINLLPLATFAMETYADDPCTLFGPKVEKEDCTYNAKTLRMIGQMHKAISVIQFKLEAEIIRRRPDFEMDDRMLLHRIDFERKTITMPNGKEYELKDSFLPTVNPADPYKLTDEEREIMNKLHRSFVSSEKLKKHIRCLFRYGCMYTVSNSNLLFHASIPLNADGTLKDVSIAGKMYKGKALLEKVGHLIRTAFFAEEDNEDRPFAVDYVWYLWCGKDSPAFDKDKMATFERYFLKEKELHKEVKGHYYSLRNEEKVCDMLLDEFGVIGTHRHIINGHVPVKTIQGENPIKANGKMMVIDGGFSKAYHSETGIAGYTLVYHSRGFQLVQHEPFTSMQKAIEEGQDIKSSTQIVEMSTQRMMVKDTDKGRELVTQINDLKKLLMAYRTGLIKEKSI.

Belongs to the FBPase class 3 family. Requires Mn(2+) as cofactor.

It catalyses the reaction beta-D-fructose 1,6-bisphosphate + H2O = beta-D-fructose 6-phosphate + phosphate. Its pathway is carbohydrate biosynthesis; gluconeogenesis. This Phocaeicola vulgatus (strain ATCC 8482 / DSM 1447 / JCM 5826 / CCUG 4940 / NBRC 14291 / NCTC 11154) (Bacteroides vulgatus) protein is Fructose-1,6-bisphosphatase class 3.